Here is a 458-residue protein sequence, read N- to C-terminus: Argininosuccinate lyase (458 aa).

The protein belongs to the lyase 1 family. Argininosuccinate lyase subfamily.

It is found in the cytoplasm. It carries out the reaction 2-(N(omega)-L-arginino)succinate = fumarate + L-arginine. The protein operates within amino-acid biosynthesis; L-arginine biosynthesis; L-arginine from L-ornithine and carbamoyl phosphate: step 3/3. This is Argininosuccinate lyase from Actinobacillus pleuropneumoniae serotype 3 (strain JL03).